We begin with the raw amino-acid sequence, 346 residues long: Flap endonuclease 1 (346 aa).

The segment at 1-100 (MGVDIKELVE…KELERRYQIK (100 aa)) is N-domain. Positions 29, 82, 154, 156, 175, 177, and 238 each coordinate Mg(2+). An I-domain region spans residues 118–260 (EARIYAQQTS…KALKLVKELK (143 aa)). The segment at 336-344 (KQQSLESWF) is interaction with PCNA.

The protein belongs to the XPG/RAD2 endonuclease family. FEN1 subfamily. Interacts with PCNA. PCNA stimulates the nuclease activity without altering cleavage specificity. The cofactor is Mg(2+).

Structure-specific nuclease with 5'-flap endonuclease and 5'-3' exonuclease activities involved in DNA replication and repair. During DNA replication, cleaves the 5'-overhanging flap structure that is generated by displacement synthesis when DNA polymerase encounters the 5'-end of a downstream Okazaki fragment. Binds the unpaired 3'-DNA end and kinks the DNA to facilitate 5' cleavage specificity. Cleaves one nucleotide into the double-stranded DNA from the junction in flap DNA, leaving a nick for ligation. Also involved in the base excision repair (BER) pathway. Acts as a genome stabilization factor that prevents flaps from equilibrating into structures that lead to duplications and deletions. Also possesses 5'-3' exonuclease activity on nicked or gapped double-stranded DNA. The chain is Flap endonuclease 1 from Thermofilum pendens (strain DSM 2475 / Hrk 5).